A 246-amino-acid chain; its full sequence is Exosome complex component Rrp41 (246 aa).

The protein belongs to the RNase PH family. Rrp41 subfamily. Component of the archaeal exosome complex. Forms a hexameric ring-like arrangement composed of 3 Rrp41-Rrp42 heterodimers. The hexameric ring associates with a trimer of Rrp4 and/or Csl4 subunits.

Its subcellular location is the cytoplasm. Catalytic component of the exosome, which is a complex involved in RNA degradation. Has 3'-&gt;5' exoribonuclease activity. Can also synthesize heteromeric RNA-tails. The sequence is that of Exosome complex component Rrp41 from Pyrobaculum calidifontis (strain DSM 21063 / JCM 11548 / VA1).